The chain runs to 97 residues: Integration host factor subunit beta (97 aa).

It belongs to the bacterial histone-like protein family. Heterodimer of an alpha and a beta chain.

Functionally, this protein is one of the two subunits of integration host factor, a specific DNA-binding protein that functions in genetic recombination as well as in transcriptional and translational control. The polypeptide is Integration host factor subunit beta (Buchnera aphidicola subsp. Cinara cedri (strain Cc)).